Here is an 81-residue protein sequence, read N- to C-terminus: Short neurotoxin 2 (81 aa).

Positions 1-21 (MKTLLLTLVVVTIVCLDLGYT) are cleaved as a signal peptide. Cystine bridges form between Cys-24/Cys-43, Cys-38/Cys-60, Cys-62/Cys-73, and Cys-74/Cys-79.

It belongs to the three-finger toxin family. Short-chain subfamily. Type I alpha-neurotoxin sub-subfamily. Expressed by the venom gland.

It is found in the secreted. Functionally, binds to muscle nicotinic acetylcholine receptor (nAChR) and inhibit acetylcholine from binding to the receptor, thereby impairing neuromuscular transmission. The sequence is that of Short neurotoxin 2 from Cryptophis nigrescens (Eastern small-eyed snake).